Here is a 155-residue protein sequence, read N- to C-terminus: SsrA-binding protein (155 aa).

The protein belongs to the SmpB family.

It localises to the cytoplasm. Functionally, required for rescue of stalled ribosomes mediated by trans-translation. Binds to transfer-messenger RNA (tmRNA), required for stable association of tmRNA with ribosomes. tmRNA and SmpB together mimic tRNA shape, replacing the anticodon stem-loop with SmpB. tmRNA is encoded by the ssrA gene; the 2 termini fold to resemble tRNA(Ala) and it encodes a 'tag peptide', a short internal open reading frame. During trans-translation Ala-aminoacylated tmRNA acts like a tRNA, entering the A-site of stalled ribosomes, displacing the stalled mRNA. The ribosome then switches to translate the ORF on the tmRNA; the nascent peptide is terminated with the 'tag peptide' encoded by the tmRNA and targeted for degradation. The ribosome is freed to recommence translation, which seems to be the essential function of trans-translation. The protein is SsrA-binding protein of Moorella thermoacetica (strain ATCC 39073 / JCM 9320).